A 1523-amino-acid polypeptide reads, in one-letter code: Disco-interacting protein 2 homolog A (1523 aa).

The 97-residue stretch at 9–105 folds into the DMAP1-binding domain; sequence EAAPLPAEVL…TSSASEDEGS (97 aa). Positions 72–110 are disordered; sequence KMPMPSKRRSALVHSSVETYTPPDTSSASEDEGSLRRPG. Positions 87–99 are enriched in polar residues; sequence SVETYTPPDTSSA. T92 and T115 each carry phosphothreonine. The disordered stretch occupies residues 132–158; sequence QGSSTSSSASSTSSHPGGRPAAAPSAS. Residues 134–158 are compositionally biased toward low complexity; that stretch reads SSTSSSASSTSSHPGGRPAAAPSAS. Short sequence motifs (PXXP motif; required for interaction with CTTN) lie at residues 235 to 238 and 259 to 262; these read PKRP and PNQP.

Belongs to the DIP2 family. Interacts with FSTL1; DIP2A may act as a cell surface receptor for FSTL1. Interacts (via N-terminus) with CTTN (via SH3 domain); the interaction promotes acetylation of CTTN and is required for proper synaptic transmission. Interacts with SHANK3. As to expression, detected in heart, liver, spleen, lung, kidney and brain with highest levels in brain (at protein level). In adult cortex, preferentially expressed in excitatory neurons. Broadly expressed in neuronal, reproductive and vascular tissues as well as in heart, kidney, liver and lung with expression detected in neurons, mesenchyme, endothelium, smooth muscle cells and cardiomyocytes. Expressed in ectoderm-derived tissues in the developing embryo. Expressed in the developing nervous system.

It is found in the cell membrane. It localises to the mitochondrion. Its subcellular location is the cell projection. The protein localises to the dendritic spine. It carries out the reaction acetate + ATP + CoA = acetyl-CoA + AMP + diphosphate. In terms of biological role, catalyzes the de novo synthesis of acetyl-CoA in vitro. Promotes acetylation of CTTN, possibly by providing the acetyl donor, ensuring correct dendritic spine morphology and synaptic transmission. Binds to follistatin-related protein FSTL1 and may act as a cell surface receptor for FSTL1, contributing to AKT activation and subsequent FSTL1-induced survival and function of endothelial cells and cardiac myocytes. The polypeptide is Disco-interacting protein 2 homolog A (Dip2a) (Mus musculus (Mouse)).